The following is a 259-amino-acid chain: MVLATSLKGAHVLITGGTRGMGEAMVHQFLQEEANVSYCARTVTNTEFDEFYKTLPEGNTARAVGTAFNVASKEAIVDWVKSSAERLGRIDVIIANASPMHMEGETEHWVESFAIDVMGFVELVRAATPYLEQSPQASIIVQSSFMGREFYRSPPAAYGPCKAAQLQHVQELSHYLGPKGIRVNAISPGPILCKGGPWEKYSTLMPEWVEEQRLKIPLKRLGGPTEVANVAVFLASPLASFVTGTNVLVDGGIHVGTQF.

Asparagine 96 and arginine 125 together coordinate NADP(+). Active-site proton donor residues include serine 143 and serine 144. 3 residues coordinate NADP(+): tyrosine 158, lysine 162, and isoleucine 191. The active-site Proton acceptor is the tyrosine 158. Lysine 162 (lowers pKa of active site Tyr) is an active-site residue.

The protein belongs to the short-chain dehydrogenases/reductases (SDR) family.

The protein localises to the cytoplasm. Its subcellular location is the cytosol. It carries out the reaction isoepoxydon + NADP(+) = phyllostine + NADPH + H(+). It participates in mycotoxin biosynthesis; patulin biosynthesis. Its function is as follows. Isoepoxydon dehydrogenase; part of the gene cluster that mediates the biosynthesis of patulin, an acetate-derived tetraketide mycotoxin produced by several fungal species that shows antimicrobial properties against several bacteria. PatN catalyzes the conversion of isoepoxydon into phyllostine. The pathway begins with the synthesis of 6-methylsalicylic acid by the polyketide synthase (PKS) patK via condensation of acetate and malonate units. The 6-methylsalicylic acid decarboxylase patG then catalyzes the decarboxylation of 6-methylsalicylic acid to yield m-cresol (also known as 3-methylphenol). These first reactions occur in the cytosol. The intermediate m-cresol is then transported into the endoplasmic reticulum where the cytochrome P450 monooxygenase patH converts it to m-hydroxybenzyl alcohol, which is further converted to gentisyl alcohol by the cytochrome P450 monooxygenase patI. The oxidoreductases patJ and patO further convert gentisyl alcohol to isoepoxydon in the vacuole. PatN catalyzes then the transformation of isoepoxydon into phyllostine. The cluster protein patF is responsible for the conversion from phyllostine to neopatulin whereas the alcohol dehydrogenase patD converts neopatulin to E-ascladiol. The steps between isoepoxydon and E-ascladiol occur in the cytosol, and E-ascladiol is probably secreted to the extracellular space by one of the cluster-specific transporters patC or patM. Finally, the secreted patulin synthase patE catalyzes the conversion of E-ascladiol to patulin. This chain is Isoepoxydon dehydrogenase patN, found in Aspergillus clavatus (strain ATCC 1007 / CBS 513.65 / DSM 816 / NCTC 3887 / NRRL 1 / QM 1276 / 107).